A 90-amino-acid polypeptide reads, in one-letter code: Protein LURE 1.4 (90 aa).

A signal peptide spans 1–19; that stretch reads MKCPSIFLTLLIFVSSCTS. Asparagine 23 carries N-linked (GlcNAc...) asparagine glycosylation. 3 disulfides stabilise this stretch: cysteine 58–cysteine 75, cysteine 61–cysteine 82, and cysteine 65–cysteine 84. Residues 67–87 form a PRK6 binding region; the sequence is RRGKYIRTCSFERKLCRCSIS.

This sequence belongs to the DEFL family. As to quaternary structure, binds to PRK6 LRRs. Expressed in the pistil. Detected exclusively in the synergid cells.

It localises to the secreted. In terms of biological role, pollen tube attractants guiding pollen tubes to the ovular micropyle. The chain is Protein LURE 1.4 from Arabidopsis thaliana (Mouse-ear cress).